Consider the following 503-residue polypeptide: Potassium voltage-gated channel subfamily V member 1 (503 aa).

Disordered regions lie at residues Met-1–Ser-20 and Lys-171–Cys-192. Residues Leu-3–Arg-213 lie on the Cytoplasmic side of the membrane. The span at Leu-10 to Ser-20 shows a compositional bias: low complexity. Residues Lys-171–Phe-187 are compositionally biased toward basic and acidic residues. A helical transmembrane segment spans residues Ile-214–Ser-234. Residues Ala-235 to Asn-241 lie on the Extracellular side of the membrane. Residues Leu-242–Leu-262 form a helical membrane-spanning segment. Residues Arg-263–Asn-279 lie on the Cytoplasmic side of the membrane. Residues Ile-280 to Gly-300 traverse the membrane as a helical segment. Residues Ser-301–Arg-312 lie on the Extracellular side of the membrane. A helical; Voltage-sensor transmembrane segment spans residues Leu-313–Gly-334. Residues Leu-335 to Glu-348 lie on the Cytoplasmic side of the membrane. Residues Val-349–Phe-369 traverse the membrane as a helical segment. A Selectivity filter motif is present at residues Thr-395–Asp-400. Residues Ile-410 to Ile-430 traverse the membrane as a helical segment. The Cytoplasmic segment spans residues Asn-431–Phe-503.

Belongs to the potassium channel family. V (TC 1.A.1.2) subfamily. Kv8.1/KCNV1 sub-subfamily. Heteromultimer with KCNB1 and KCNB2. Interacts with KCNC4 and KCND1.

Its subcellular location is the cell membrane. Potassium channel subunit that does not form functional channels by itself. Modulates KCNB1 and KCNB2 channel activity by shifting the threshold for inactivation to more negative values and by slowing the rate of inactivation. Can down-regulate the channel activity of KCNB1, KCNB2, KCNC4 and KCND1, possibly by trapping them in intracellular membranes. In Mus musculus (Mouse), this protein is Potassium voltage-gated channel subfamily V member 1 (Kcnv1).